Reading from the N-terminus, the 236-residue chain is 7-cyano-7-deazaguanine synthase (236 aa).

7–17 (CSGGLDSVSLA) contacts ATP. Residues Cys185, Cys193, Cys196, and Cys199 each contribute to the Zn(2+) site.

The protein belongs to the QueC family. It depends on Zn(2+) as a cofactor.

It catalyses the reaction 7-carboxy-7-deazaguanine + NH4(+) + ATP = 7-cyano-7-deazaguanine + ADP + phosphate + H2O + H(+). Its pathway is purine metabolism; 7-cyano-7-deazaguanine biosynthesis. In terms of biological role, catalyzes the ATP-dependent conversion of 7-carboxy-7-deazaguanine (CDG) to 7-cyano-7-deazaguanine (preQ(0)). The polypeptide is 7-cyano-7-deazaguanine synthase (Rhizobium etli (strain ATCC 51251 / DSM 11541 / JCM 21823 / NBRC 15573 / CFN 42)).